We begin with the raw amino-acid sequence, 43 residues long: Protein PsbN (43 aa).

Residues 3–23 traverse the membrane as a helical segment; the sequence is IATLVAIFISGLLVSFTGYAL.

The protein belongs to the PsbN family.

Its subcellular location is the plastid. The protein localises to the chloroplast thylakoid membrane. In terms of biological role, may play a role in photosystem I and II biogenesis. This chain is Protein PsbN, found in Euonymus alatus (Burning bush).